The sequence spans 520 residues: Cobyric acid synthase (520 aa).

One can recognise a GATase cobBQ-type domain in the interval 275 to 453 (VLRVAVIRLP…WHGVLENDAF (179 aa)). Residue cysteine 356 is the Nucleophile of the active site. Histidine 445 is an active-site residue.

The protein belongs to the CobB/CobQ family. CobQ subfamily.

It functions in the pathway cofactor biosynthesis; adenosylcobalamin biosynthesis. In terms of biological role, catalyzes amidations at positions B, D, E, and G on adenosylcobyrinic A,C-diamide. NH(2) groups are provided by glutamine, and one molecule of ATP is hydrogenolyzed for each amidation. The polypeptide is Cobyric acid synthase (Frankia casuarinae (strain DSM 45818 / CECT 9043 / HFP020203 / CcI3)).